We begin with the raw amino-acid sequence, 76 residues long: MVTPTKHAIGLRSASGVELLAHIGLDTVTFDGTPFSLKVKEGDTVKKGEVLVEFDKAFIEDIEESALHQKIFTVVS.

The PTS EIIA type-1 domain occupies 1–76 (MVTPTKHAIG…LHQKIFTVVS (76 aa)). Catalysis depends on H22, which acts as the Tele-phosphohistidine intermediate.

It localises to the cytoplasm. The phosphoenolpyruvate-dependent sugar phosphotransferase system (PTS), a major carbohydrate active -transport system, catalyzes the phosphorylation of incoming sugar substrates concomitant with their translocation across the cell membrane. The protein is Putative phosphotransferase enzyme IIA component YyzE (yyzE) of Bacillus subtilis (strain 168).